The following is a 405-amino-acid chain: Threonine synthase (405 aa).

At Lys-106 the chain carries N6-(pyridoxal phosphate)lysine. Pyridoxal 5'-phosphate-binding positions include Asn-132, Gly-233–Asn-237, and Thr-371.

This sequence belongs to the threonine synthase family. Requires pyridoxal 5'-phosphate as cofactor.

The catalysed reaction is O-phospho-L-homoserine + H2O = L-threonine + phosphate. The protein operates within amino-acid biosynthesis; L-threonine biosynthesis; L-threonine from L-aspartate: step 5/5. In terms of biological role, catalyzes the gamma-elimination of phosphate from L-phosphohomoserine and the beta-addition of water to produce L-threonine. This Methanocaldococcus jannaschii (strain ATCC 43067 / DSM 2661 / JAL-1 / JCM 10045 / NBRC 100440) (Methanococcus jannaschii) protein is Threonine synthase (thrC).